Reading from the N-terminus, the 206-residue chain is LexA repressor (206 aa).

Residues 28 to 48 (RAEIARELGFRSANAAEEHLK) constitute a DNA-binding region (H-T-H motif). Residues Ser123 and Lys160 each act as for autocatalytic cleavage activity in the active site.

The protein belongs to the peptidase S24 family. Homodimer.

It carries out the reaction Hydrolysis of Ala-|-Gly bond in repressor LexA.. Represses a number of genes involved in the response to DNA damage (SOS response), including recA and lexA. In the presence of single-stranded DNA, RecA interacts with LexA causing an autocatalytic cleavage which disrupts the DNA-binding part of LexA, leading to derepression of the SOS regulon and eventually DNA repair. This Vibrio parahaemolyticus serotype O3:K6 (strain RIMD 2210633) protein is LexA repressor.